The primary structure comprises 213 residues: Ras-like protein rasU (213 aa).

21-28 (GDGGVGKT) provides a ligand contact to GTP. An Effector region motif is present at residues 43–51 (YDPTIEDLY). GTP is bound by residues 68-72 (DTAGQ) and 126-129 (NKSD). Cysteine 210 is modified (cysteine methyl ester). Cysteine 210 is lipidated: S-geranylgeranyl cysteine. Residues 211–213 (KMI) constitute a propeptide, removed in mature form.

Belongs to the small GTPase superfamily. Ras family.

The protein resides in the cell membrane. It carries out the reaction GTP + H2O = GDP + phosphate + H(+). In terms of biological role, ras proteins bind GDP/GTP and possess intrinsic GTPase activity. The polypeptide is Ras-like protein rasU (rasU) (Dictyostelium discoideum (Social amoeba)).